The following is a 223-amino-acid chain: Probable Brix domain-containing ribosomal biogenesis protein (223 aa).

Positions Met1–Trp196 constitute a Brix domain.

Probably involved in the biogenesis of the ribosome. This chain is Probable Brix domain-containing ribosomal biogenesis protein, found in Pyrococcus furiosus (strain ATCC 43587 / DSM 3638 / JCM 8422 / Vc1).